A 600-amino-acid chain; its full sequence is Monooxygenase ptmN (600 aa).

The protein belongs to the FMO family. The cofactor is FAD.

It functions in the pathway secondary metabolite biosynthesis. Its function is as follows. Monooxygenase; part of the gene cluster that mediates the biosynthesis of the indole diterpenes penitrems. The geranylgeranyl diphosphate (GGPP) synthase ptmG catalyzes the first step in penitrem biosynthesis via conversion of farnesyl pyrophosphate and isopentyl pyrophosphate into geranylgeranyl pyrophosphate (GGPP). Condensation of indole-3-glycerol phosphate with GGPP by the prenyl transferase ptmC then forms 3-geranylgeranylindole (3-GGI). Epoxidation by the FAD-dependent monooxygenase ptmM leads to a epoxidized-GGI that is substrate of the terpene cyclase ptmB for cyclization to yield paspaline. Paspaline is subsequently converted to 13-desoxypaxilline by the cytochrome P450 monooxygenase ptmP, the latter being then converted to paxilline by the cytochrome P450 monooxygenase ptmQ. Paxilline is converted to beta-paxitriol via C-10 ketoreduction by the short-chain dehydrogenase ptmH which can be monoprenylated at the C-20 by the indole diterpene prenyltransferase ptmD. A two-step elimination (acetylation and elimination) process performed by the O-acetyltransferase ptmV and ptmI leads to the production of the prenylated form of penijanthine. The FAD-linked oxidoreductase ptmO then converts the prenylated form of penijanthine into PC-M5 which is in turn transformed into PC-M4 by the aromatic dimethylallyltransferase ptmE. Five sequential oxidative transformations performed by the cytochrome P450 monooxygenases ptmK, ptmU, ptmL, ptmN and ptmJ yield the various penitrem compounds. PtmK, ptmU and ptmM are involved in the formation of the key bicyclic ring of penitrem C via the formation of the intermediates secopenitrem D and penitrem D. PtmL catalyzes the epoxidation of penitrem D and C to yield penitrem B and F, respectively. PtmJ catalyzes the last benzylic hydroxylation to convert penitrem B to prenitrem E and penitrem F to penitrem A. The protein is Monooxygenase ptmN of Penicillium ochrochloron.